The primary structure comprises 138 residues: Phospholipase A2 EC3 (138 aa).

The N-terminal stretch at 1 to 16 is a signal peptide; the sequence is MRTLWIVAVWLMGVEG. Cystine bridges form between Cys-42/Cys-131, Cys-44/Cys-60, Cys-59/Cys-111, Cys-65/Cys-138, Cys-66/Cys-104, Cys-73/Cys-97, and Cys-91/Cys-102. Ca(2+) is bound by residues Tyr-43, Gly-45, and Gly-47. His-63 is an active-site residue. Asp-64 provides a ligand contact to Ca(2+). Asp-105 is a catalytic residue.

It belongs to the phospholipase A2 family. Group II subfamily. Requires Ca(2+) as cofactor.

The protein localises to the secreted. The enzyme catalyses a 1,2-diacyl-sn-glycero-3-phosphocholine + H2O = a 1-acyl-sn-glycero-3-phosphocholine + a fatty acid + H(+). Functionally, PA2 catalyzes the calcium-dependent hydrolysis of the 2-acyl groups in 3-sn-phosphoglycerides. The polypeptide is Phospholipase A2 EC3 (Echis coloratus (Carpet viper)).